We begin with the raw amino-acid sequence, 961 residues long: Transcription factor MYB3R-4 (961 aa).

The interval 1-33 (MEAESSTPQERIPKLRHGRTSGPARRSTRGQWT) is disordered. HTH myb-type domains are found at residues 24–75 (ARRS…QKVL), 76–131 (NPEL…NPAI), and 132–182 (NKEA…KKKL). DNA-binding regions (H-T-H motif) lie at residues 52–75 (WKKI…QKVL), 104–127 (WSTI…HNHL), and 155–178 (WAEL…HSSV). 2 disordered regions span residues 390–457 (GHSV…LIIS) and 534–555 (RPHS…EDMG). Polar residues-rich tracts occupy residues 391–405 (HSVS…NEFN) and 416–430 (SSAS…TKSP). A compositionally biased stretch (low complexity) spans 431 to 444 (TQSSSSRFTATAAS). A compositionally biased stretch (basic and acidic residues) spans 534 to 554 (RPHSLPKHEPNMTNEQHHEDM). A Nuclear localization signal motif is present at residues 612-619 (GKKTLVGA). A disordered region spans residues 756–781 (NTGKPVLSTPGQSVTKAEKAQVSTPR). Polar residues predominate over residues 764–781 (TPGQSVTKAEKAQVSTPR).

Component of a DREAM-like complex which modulates a variety of developmentally regulated genes and of the mitotic genes in proliferating and differentiated cells. Associates with CDKA-1, RBR1 and E2FB, but not with E2FC, in proliferating cells, at early stages of leaves development. Expressed in roots, cotyledons and leaves, especially in vascular tissues, and in flowers.

It is found in the nucleus. Its function is as follows. Transcription factor that binds 5'-AACGG-3' motifs in gene promoters. Involved in the regulation of cytokinesis, probably via the activation of several G2/M phase-specific genes transcription (e.g. KNOLLE). Required for the maintenance of diploidy. Involved in transcription regulation during induced endoreduplication at the powdery mildew (e.g. G.orontii) infection site, thus promoting G.orontii growth and reproduction. This chain is Transcription factor MYB3R-4, found in Arabidopsis thaliana (Mouse-ear cress).